The sequence spans 275 residues: Phosphonoacetaldehyde hydrolase (275 aa).

The Nucleophile role is filled by aspartate 15. Mg(2+)-binding residues include aspartate 15 and alanine 17. The Schiff-base intermediate with substrate role is filled by lysine 56. Aspartate 189 is a binding site for Mg(2+).

This sequence belongs to the HAD-like hydrolase superfamily. PhnX family. In terms of assembly, homodimer. Mg(2+) is required as a cofactor.

It catalyses the reaction phosphonoacetaldehyde + H2O = acetaldehyde + phosphate + H(+). In terms of biological role, involved in phosphonate degradation. The chain is Phosphonoacetaldehyde hydrolase from Pseudomonas entomophila (strain L48).